Reading from the N-terminus, the 480-residue chain is Probable serine/threonine-protein phosphatase 2A regulatory subunit B'' subunit TON2 (480 aa).

EF-hand domains lie at 186 to 221, 294 to 329, and 369 to 404; these read VSLTQARIDMSELDEDSDGFLHSDEMESYIGGLIPN, TSAQRICDMFLALDKDMSGSLCKQELKEYADGTLTE, and DTPEGLTYLFRCLDLQGRGFLTTADIHSLFRDVHQK. Ca(2+) is bound by residues Asp-307, Asp-309, Ser-311, Ser-313, and Glu-318.

Interacts with PP2AA1. As to expression, widely expressed.

Its subcellular location is the cytoplasm. The protein resides in the cytoskeleton. Its function is as follows. Probable regulatory subunit of type 2A protein phosphatase involved in the control of the dynamic organization of the cortical cytoskeleton. Plays an important role in the organization of interphase microtubule arrays in part through the regulation of nucleation geometry. Required for the reorganization of cortical arrays in response to light. In Arabidopsis thaliana (Mouse-ear cress), this protein is Probable serine/threonine-protein phosphatase 2A regulatory subunit B'' subunit TON2 (TON2).